A 105-amino-acid chain; its full sequence is Large ribosomal subunit protein mL49 (105 aa).

Residues 1–15 constitute a mitochondrion transit peptide; that stretch reads MRSSLKPVLSNLRFN.

Belongs to the mitochondrion-specific ribosomal protein mL49 family. In terms of assembly, component of the mitochondrial large ribosomal subunit (mt-LSU). Mature yeast 74S mitochondrial ribosomes consist of a small (37S) and a large (54S) subunit. The 37S small subunit contains a 15S ribosomal RNA (15S mt-rRNA) and at least 32 different proteins. The 54S large subunit contains a 21S rRNA (21S mt-rRNA) and at least 45 different proteins.

The protein resides in the mitochondrion. Functionally, component of the mitochondrial ribosome (mitoribosome), a dedicated translation machinery responsible for the synthesis of mitochondrial genome-encoded proteins, including at least some of the essential transmembrane subunits of the mitochondrial respiratory chain. The mitoribosomes are attached to the mitochondrial inner membrane and translation products are cotranslationally integrated into the membrane. The sequence is that of Large ribosomal subunit protein mL49 (img2) from Schizosaccharomyces pombe (strain 972 / ATCC 24843) (Fission yeast).